We begin with the raw amino-acid sequence, 54 residues long: Snake venom 5'-nucleotidase (54 aa).

Aspartate 11 and histidine 13 together coordinate Zn(2+). Asparagine 46 is a glycosylation site (N-linked (GlcNAc...) asparagine).

Belongs to the 5'-nucleotidase family. Zn(2+) is required as a cofactor. In terms of processing, venom 5'-nucleotidases (or a part thereof) may be released into the venom via exosome-like vesicles. They may be attached via a GPI anchor to the membrane of these vesicles. Soluble forms of 5'-nucleotidase might be released by cleavage of the ectodomain in the exosome-like vesicles or venom gland cells. In terms of tissue distribution, expressed by the venom gland.

Its subcellular location is the membrane. It carries out the reaction a ribonucleoside 5'-phosphate + H2O = a ribonucleoside + phosphate. Its function is as follows. Hydrolyzes nucleotides into nucleosides. Snake venom 5'-nucleotidases are widely distributed among venomous snake taxa, but there is a lack of information about their biological activities. They have been shown to inhibit platelet aggregation. This effect may be due to the liberation of inhibitory AMP or adenosine by its action on ADP released upon initiation of aggregation. Venom 5'-nucleotidases are also known to synergistically act in vivo with other toxins like ADPases, phospholipases, and disintegrins to exert a more pronounced anti-coagulant effect. The sequence is that of Snake venom 5'-nucleotidase from Gloydius blomhoffii blomhoffii (Japanese mamushi).